The sequence spans 184 residues: Ribosome-recycling factor (184 aa).

It belongs to the RRF family.

It is found in the cytoplasm. Functionally, responsible for the release of ribosomes from messenger RNA at the termination of protein biosynthesis. May increase the efficiency of translation by recycling ribosomes from one round of translation to another. The polypeptide is Ribosome-recycling factor (Desulfotalea psychrophila (strain LSv54 / DSM 12343)).